The sequence spans 175 residues: Transcription factor HES-3 (175 aa).

Positions 1–49 (MEKKRRARINLSLEQLRSLLERHYSHQIRKRKLEKADILELSVKYVRSL) constitute a bHLH domain. The Orange domain occupies 65–98 (YPSGFRGGLPGSSQRLRPGEDDSGLRCPLLLQRR). The span at 124–145 (PGPPAGGSQSPQSPFPPLGGLL) shows a compositional bias: low complexity. The interval 124–175 (PGPPAGGSQSPQSPFPPLGGLLESSTGILAPPPASNCQAENPRPGFRVWRPW) is disordered. The short motif at 172–175 (WRPW) is the WRPW motif element.

Transcription repression requires formation of a complex with a corepressor protein of the Groucho/TLE family. As to expression, expressed exclusively in Purkinje cells.

The protein localises to the nucleus. Transcriptional repressor of genes that require a bHLH protein for their transcription. The polypeptide is Transcription factor HES-3 (Hes3) (Rattus norvegicus (Rat)).